The primary structure comprises 339 residues: DNA-directed RNA polymerase subunit alpha (339 aa).

An alpha N-terminal domain (alpha-NTD) region spans residues 1–233 (MVREEITGST…DLFLPFIHTE (233 aa)). The tract at residues 266–339 (GIPLNCIFID…IDLPKNKFSL (74 aa)) is alpha C-terminal domain (alpha-CTD).

It belongs to the RNA polymerase alpha chain family. In plastids the minimal PEP RNA polymerase catalytic core is composed of four subunits: alpha, beta, beta', and beta''. When a (nuclear-encoded) sigma factor is associated with the core the holoenzyme is formed, which can initiate transcription.

The protein localises to the plastid. The protein resides in the chloroplast. It catalyses the reaction RNA(n) + a ribonucleoside 5'-triphosphate = RNA(n+1) + diphosphate. In terms of biological role, DNA-dependent RNA polymerase catalyzes the transcription of DNA into RNA using the four ribonucleoside triphosphates as substrates. This Sorghum bicolor (Sorghum) protein is DNA-directed RNA polymerase subunit alpha.